Reading from the N-terminus, the 251-residue chain is Eukaryotic translation initiation factor 4E-3 (251 aa).

Positions 200 to 251 (DSSARTSSTVKPRICLPAKDPAPVKEKGPAATTSPSNPGTEATGTSPATPTP) are disordered. The span at 230 to 251 (ATTSPSNPGTEATGTSPATPTP) shows a compositional bias: polar residues.

It belongs to the eukaryotic initiation factor 4E family. In terms of assembly, eIF4F is a multi-subunit complex, the composition of which varies with external and internal environmental conditions. It is composed of at least eIF4A, eIF4E and eIF4G. eIF4E is also known to interact with other partners. Interacts with mxt. Component of the pid-1 variant of the PETISCO complex (also called the pid-3, erh-2, tofu-6, and ife-3 small RNA complex) containing at least pid-1, tofu-6, ife-3, pid-3, and erh-2, which is required for the biogenesis of a class of 21 nucleotide PIWI-interacting RNAs (piRNAs) that possess a uracil residue at the 5'-end (also called 21U-RNAs). Component of the tost-1 variant of the PETISCO complex (also called the pid-3, erh-2, tofu-6, and ife-3 small RNA complex) containing at least tost-1, tofu-6, ife-3, pid-3, and erh-2, which plays an essential role in embryogenesis. Within the pid-1 and tost-1 variants of the PETISCO complexes interacts with tofu-6 (via C-terminus). In contrast to the pid-1 variant of the PETISCO complex, the tost-1 variant of the PETISCO complex plays a minor role in the biogenesis of 21U-RNAs. In terms of tissue distribution, highly expressed in the germline (at protein level).

It is found in the cytoplasmic granule. The protein resides in the cytoplasm. It localises to the perinuclear region. Recognizes and binds the 7-methylguanosine-containing mRNA cap during an early step in the initiation of protein synthesis and facilitates ribosome binding by inducing the unwinding of the mRNAs secondary structures. All 5 eIF4E proteins bind monomethyl cap structures. Only ife-1, ife-2 and ife-5 bind trimethyl cap structures which result from trans-splicing. Translation of trimethyl cap structure mRNAs may be regulated by intracellular redox state; disulfide bonds change the width and depth of the cap-binding cavity determining selectivity to mRNA caps. Ife-3 is essential for viability. Component of the pid-1 and tost-1 variants of the PETISCO complexes, which have roles in the biogenesis of a class of 21 nucleotide PIWI-interacting RNAs (piRNAs) that possess a uracil residue at the 5'-end (also called 21U-RNAs) and embryogenesis, respectively. Within the pid-1 variant of the PETISCO complex binds to capped 21U-RNA precursor molecules, possibly playing a role in the processing of the 5' end of the molecules to promote binding of other complex components such as pid-3. However, it is not essential for the biogenesis of 21U-RNAs by itself. Within the tost-1 variant of the PETISCO complex binds to splice leader SL1 RNA fragments to possibly play a role in their processing. This chain is Eukaryotic translation initiation factor 4E-3, found in Caenorhabditis elegans.